Consider the following 361-residue polypeptide: Alanine racemase (361 aa).

Lys35 serves as the catalytic Proton acceptor; specific for D-alanine. Lys35 is modified (N6-(pyridoxal phosphate)lysine). Arg132 provides a ligand contact to substrate. Tyr257 functions as the Proton acceptor; specific for L-alanine in the catalytic mechanism. Met305 is a substrate binding site.

The protein belongs to the alanine racemase family. The cofactor is pyridoxal 5'-phosphate.

The enzyme catalyses L-alanine = D-alanine. It participates in amino-acid biosynthesis; D-alanine biosynthesis; D-alanine from L-alanine: step 1/1. Catalyzes the interconversion of L-alanine and D-alanine. May also act on other amino acids. This Thioalkalivibrio sulfidiphilus (strain HL-EbGR7) protein is Alanine racemase (alr).